The primary structure comprises 604 residues: Glucose oxidase 2 (604 aa).

A signal peptide spans 1–16 (MKLLGLLSGLVVVATA). Positions 49 and 50 each coordinate FAD. N-linked (GlcNAc...) asparagine glycosylation is present at asparagine 63. Glutamate 70 is an FAD binding site. N-linked (GlcNAc...) asparagine glycosylation occurs at asparagine 109. Positions 123, 127, 128, and 130 each coordinate FAD. A disulfide bridge links cysteine 184 with cysteine 226. N-linked (GlcNAc...) asparagine glycosylation is present at asparagine 214. Valine 270 is a binding site for FAD. 3 N-linked (GlcNAc...) asparagine glycosylation sites follow: asparagine 375, asparagine 408, and asparagine 517. Residue histidine 536 is the Proton acceptor of the active site. Residues arginine 557 and valine 558 each coordinate O2. Residues glycine 569 and methionine 581 each coordinate FAD. An N-linked (GlcNAc...) asparagine glycan is attached at asparagine 600.

It belongs to the GMC oxidoreductase family. As to quaternary structure, homodimer. The cofactor is FAD.

It localises to the secreted. The protein resides in the cell wall. Its subcellular location is the cytoplasm. The protein localises to the extracellular space. It is found in the extracellular matrix. The catalysed reaction is beta-D-glucose + O2 = D-glucono-1,5-lactone + H2O2. Glucose oxidase catalyzes the oxidation of beta-D-glucose to D-glucono-delta-lactone and hydrogen peroxide in the presence of molecular oxygen. D-glucono-delta-lactone is sequentially hydrolyzed by lactonase to D-gluconic acid, and the resulting hydrogen peroxide is hydrolyzed by catalase to oxygen and water. Acts as a key factor contributing to fungal disease of apple. The production of gluconic acid leads to host tissue acidification that enhances the expression of pectolytic enzymes and the establishment of conditions for necrotrophic development of P.expansum. In Penicillium expansum (Blue mold rot fungus), this protein is Glucose oxidase 2.